A 354-amino-acid chain; its full sequence is UDP-2,3-diacetamido-2,3-dideoxy-D-glucuronate 2-epimerase (354 aa).

The protein belongs to the UDP-N-acetylglucosamine 2-epimerase family.

The catalysed reaction is UDP-2,3-diacetamido-2,3-dideoxy-alpha-D-glucuronate = UDP-2,3-diacetamido-2,3-dideoxy-alpha-D-mannuronate. It functions in the pathway bacterial outer membrane biogenesis; LPS O-antigen biosynthesis. Its function is as follows. Plays a role in the biosynthesis of B-band O antigen for serotype O5. Catalyzes the epimerization of UDP-2,3-diacetamido-2,3-dideoxy-alpha-D-glucuronic acid (UDP-alpha-D-GlcNAc3NAcA) to UDP-2,3-diacetamido-2,3-dideoxy-alpha-D-mannuronic acid (UDP-alpha-D-ManNAc3NAcA). Exhibits high specificity towards the substrate as UDP-alpha-D-GlcNAc, UDP-alpha-D-GlcNAcA (UDP-2-acetamido-2-deoxy-alpha-D-glucuronic acid) and UDP-alpha-D-GlcNAc3NAc (UDP-2,3-diacetamido-2,3-dideoxy-alpha-D-glucose) cannot act as substrates. The sequence is that of UDP-2,3-diacetamido-2,3-dideoxy-D-glucuronate 2-epimerase from Pseudomonas aeruginosa (strain ATCC 15692 / DSM 22644 / CIP 104116 / JCM 14847 / LMG 12228 / 1C / PRS 101 / PAO1).